The sequence spans 84 residues: Small ribosomal subunit protein bS18 (84 aa).

Belongs to the bacterial ribosomal protein bS18 family. Part of the 30S ribosomal subunit. Forms a tight heterodimer with protein bS6.

Its function is as follows. Binds as a heterodimer with protein bS6 to the central domain of the 16S rRNA, where it helps stabilize the platform of the 30S subunit. In Helicobacter hepaticus (strain ATCC 51449 / 3B1), this protein is Small ribosomal subunit protein bS18.